The sequence spans 24 residues: Citropin-3.1.2 (24 aa).

In terms of tissue distribution, expressed by the dorsal and submental skin glands.

It is found in the secreted. This Ranoidea citropa (Australian Blue Mountains tree frog) protein is Citropin-3.1.2.